Here is a 192-residue protein sequence, read N- to C-terminus: Pyruvate kinase (192 aa).

R41 contacts substrate. K(+) contacts are provided by N43, S45, D75, and T76. 43-46 contributes to the ATP binding site; sequence NFSH.

It belongs to the pyruvate kinase family. It depends on Mg(2+) as a cofactor. K(+) serves as cofactor.

The catalysed reaction is pyruvate + ATP = phosphoenolpyruvate + ADP + H(+). Its pathway is carbohydrate degradation; glycolysis; pyruvate from D-glyceraldehyde 3-phosphate: step 5/5. This chain is Pyruvate kinase (pyk), found in Spiroplasma citri.